Consider the following 1604-residue polypeptide: Ubiquitin carboxyl-terminal hydrolase 32 (1604 aa).

3 consecutive EF-hand domains span residues 91 to 126, 228 to 263, and 264 to 299; these read KDEE…VDGK, IRPS…CCRG, and PLAE…LLEV. Ca(2+) is bound by residues Asp-241, Asn-243, Asp-245, His-247, Glu-252, Asp-277, Asp-279, Asp-281, and Glu-288. Positions 369-585 constitute a DUSP domain; the sequence is ATPEEEGQII…SNLALPRPVI (217 aa). In terms of domain architecture, USP spans 734–1567; that stretch reads TGLSNLGNTC…SAYILFYEQQ (834 aa). The Nucleophile role is filled by Cys-743. Tyr-1173 is subject to Phosphotyrosine. Ser-1350 carries the phosphoserine modification. A disordered region spans residues 1353–1432; sequence EEDVLLSKSP…SKENLDTSKE (80 aa). Over residues 1360-1370 the composition is skewed to polar residues; it reads KSPSSLSANVT. Positions 1371–1399 are enriched in low complexity; sequence SSPKGSPSSSRKSGASCPSSKNSSPNSSP. Residues Ser-1372 and Ser-1376 each carry the phosphoserine modification. Residues 1415-1424 show a composition bias toward polar residues; sequence GSKNKLSNSK. Ser-1454 carries the phosphoserine modification. Positions 1484 to 1504 are disordered; the sequence is SNGQLGNHSEEDSTDDQREET. Basic and acidic residues predominate over residues 1491–1504; that stretch reads HSEEDSTDDQREET. The Proton acceptor role is filled by His-1526. Ser-1588 carries the post-translational modification Phosphoserine. Cys-1601 bears the Cysteine methyl ester mark. Cys-1601 carries the S-farnesyl cysteine lipid modification. A propeptide spans 1602–1604 (removed in mature form); it reads VLQ.

This sequence belongs to the peptidase C19 family.

Its subcellular location is the golgi apparatus membrane. It carries out the reaction Thiol-dependent hydrolysis of ester, thioester, amide, peptide and isopeptide bonds formed by the C-terminal Gly of ubiquitin (a 76-residue protein attached to proteins as an intracellular targeting signal).. Its function is as follows. Deubiquitinase that can remove conjugated ubiquitin from target proteins, such as RAB7A and LAMTOR1. Acts as a positive regulator of the mTORC1 signaling by mediating deubiquitination of LAMTOR1, thereby promoting the association between LAMTOR1 and the lysosomal V-ATPase complex and subsequent activation of the mTORC1 complex. This chain is Ubiquitin carboxyl-terminal hydrolase 32, found in Mus musculus (Mouse).